The chain runs to 439 residues: Microfibrillar-associated protein 1 (439 aa).

Disordered stretches follow at residues 1–27 and 39–200; these read MSVPSALMKQPPIQSTAGAVPVRNEKG and YVSG…PRLK. Residue S2 is modified to N-acetylserine. S52 and S53 each carry phosphoserine. Residues 61 to 70 are compositionally biased toward basic and acidic residues; sequence QFIKKAKEQE. K67 participates in a covalent cross-link: Glycyl lysine isopeptide (Lys-Gly) (interchain with G-Cter in SUMO2). Over residues 71–81 the composition is skewed to acidic residues; that stretch reads AEPEEQEEDSS. Residues S94, S116, S118, S132, and S133 each carry the phosphoserine modification. 2 stretches are compositionally biased toward acidic residues: residues 112–122 and 131–144; these read VVGESDSEVEG and DSSEEEEEEIDDEE. A compositionally biased stretch (basic and acidic residues) spans 145 to 163; the sequence is IERRRGMMRQRAQERKNEE. Residues 178 to 195 are compositionally biased toward acidic residues; that stretch reads ESESESEYEEYTDSEDEM. K249 is covalently cross-linked (Glycyl lysine isopeptide (Lys-Gly) (interchain with G-Cter in SUMO2)). Position 267 is a phosphothreonine (T267). K357 is covalently cross-linked (Glycyl lysine isopeptide (Lys-Gly) (interchain with G-Cter in SUMO2)). S361 bears the Phosphoserine mark. Glycyl lysine isopeptide (Lys-Gly) (interchain with G-Cter in SUMO2) cross-links involve residues K371, K381, K415, and K418. S432 carries the phosphoserine modification.

The protein belongs to the MFAP1 family. In terms of assembly, component of the spliceosome B complex. Interacts with PRPF38A (via N-terminal interaction domain).

The protein resides in the nucleus. Involved in pre-mRNA splicing as a component of the spliceosome. The sequence is that of Microfibrillar-associated protein 1 from Homo sapiens (Human).